We begin with the raw amino-acid sequence, 415 residues long: Putative ankyrin repeat protein FPV034 (415 aa).

ANK repeat units follow at residues 12–41, 43–72, 76–105, 107–135, 139–168, 170–200, 203–232, 237–266, 270–299, and 303–332; these read ICIK…NINT, KHFN…NINI, VGYT…IINK, DYRL…NINV, KGYT…DISI, NKYS…DVNI, HVKA…DVNI, GGRT…NVDS, VGNT…DINV, and FGET…SLKV.

The chain is Putative ankyrin repeat protein FPV034 (ANK2) from Fowlpox virus (strain NVSL) (FPV).